A 462-amino-acid chain; its full sequence is MSNLKLWEGRFSKSTAQIFDLFNASIMTDIKLFEYDILGSVAHVKMLAKCNIIREDEAKLIIDSLYQILEDFKLGKIVFGISDEDVHMLIEKELIKRIGEVGKKVHTARSRNDQVALDERLFCREKNLYLQELIKTLINTITTLAEENIDVIMPGFTHLQKAQPILFSHYILAYAQMLKRDLLRLRHNYSMTNSSPLGSAALAGTTFEIDRFFVASELGFESVTENSVDTVSDRDFILEMLFSLAMIQMHLSRLAEDFIIFNTDEFKFIELDDSFCSGSSIMPQKKNPDALELIRGKTGRVYADLIGLLTVLKGLPLSYNKDLQEDKEFLFDSIETVEMSLIVINEILKTLKIDKENMVNSCKSGFINATDLADYLVTKGVPFRDAHFIVGNIVKYCIESDKTLEDLSLEEYKRFCEKIQEDVYQFIKIETCVNRRKSYGGTSLESVRKQIDNLKEFLNKLK.

It belongs to the lyase 1 family. Argininosuccinate lyase subfamily.

Its subcellular location is the cytoplasm. It carries out the reaction 2-(N(omega)-L-arginino)succinate = fumarate + L-arginine. It functions in the pathway amino-acid biosynthesis; L-arginine biosynthesis; L-arginine from L-ornithine and carbamoyl phosphate: step 3/3. This chain is Argininosuccinate lyase, found in Caldicellulosiruptor bescii (strain ATCC BAA-1888 / DSM 6725 / KCTC 15123 / Z-1320) (Anaerocellum thermophilum).